A 338-amino-acid polypeptide reads, in one-letter code: Cinnamoyl-CoA reductase 1 (338 aa).

NADP(+) is bound by residues Gly-22–Gly-28, Arg-47, Lys-53, Asp-73–Val-74, Val-93–Ser-95, Tyr-165, Lys-169, Pro-192–Thr-195, and Ser-207. A disulfide bond links Cys-158 and Cys-166. The active-site Proton donor is the Lys-169.

It belongs to the NAD(P)-dependent epimerase/dehydratase family. Dihydroflavonol-4-reductase subfamily. As to quaternary structure, interacts with RAC1 in a GTP-dependent manner.

Its subcellular location is the cytoplasm. It catalyses the reaction (E)-cinnamaldehyde + NADP(+) + CoA = (E)-cinnamoyl-CoA + NADPH + H(+). The protein operates within aromatic compound metabolism; phenylpropanoid biosynthesis. With respect to regulation, activated by the small GTPase RAC1. Its function is as follows. Involved in the latter stages of lignin biosynthesis. Catalyzes one of the last steps of monolignol biosynthesis, the conversion of cinnamoyl-CoAs into their corresponding cinnamaldehydes. Probably involved in the formation of lignin in defense responses. This Oryza sativa subsp. japonica (Rice) protein is Cinnamoyl-CoA reductase 1.